Consider the following 95-residue polypeptide: Protein TusB (95 aa).

The protein belongs to the DsrH/TusB family. Heterohexamer, formed by a dimer of trimers. The hexameric TusBCD complex contains 2 copies each of TusB, TusC and TusD. The TusBCD complex interacts with TusE.

It localises to the cytoplasm. In terms of biological role, part of a sulfur-relay system required for 2-thiolation of 5-methylaminomethyl-2-thiouridine (mnm(5)s(2)U) at tRNA wobble positions. The polypeptide is Protein TusB (Escherichia coli O157:H7).